Here is a 128-residue protein sequence, read N- to C-terminus: Small ribosomal subunit protein uS13 (128 aa).

Positions 95 to 118 (GLPVRGQRTHTNARTRKGPKKGLV) are enriched in basic residues. Positions 95 to 128 (GLPVRGQRTHTNARTRKGPKKGLVRKAAAPAPKA) are disordered.

The protein belongs to the universal ribosomal protein uS13 family. As to quaternary structure, part of the 30S ribosomal subunit. Forms a loose heterodimer with protein S19. Forms two bridges to the 50S subunit in the 70S ribosome.

Functionally, located at the top of the head of the 30S subunit, it contacts several helices of the 16S rRNA. In the 70S ribosome it contacts the 23S rRNA (bridge B1a) and protein L5 of the 50S subunit (bridge B1b), connecting the 2 subunits; these bridges are implicated in subunit movement. Contacts the tRNAs in the A and P-sites. This chain is Small ribosomal subunit protein uS13, found in Anaeromyxobacter sp. (strain K).